A 320-amino-acid polypeptide reads, in one-letter code: Ribosomal RNA small subunit methyltransferase H (320 aa).

Residues glycine 42–histidine 44, aspartate 62, phenylalanine 86, aspartate 108, and glutamine 115 each bind S-adenosyl-L-methionine.

It belongs to the methyltransferase superfamily. RsmH family.

The protein localises to the cytoplasm. It carries out the reaction cytidine(1402) in 16S rRNA + S-adenosyl-L-methionine = N(4)-methylcytidine(1402) in 16S rRNA + S-adenosyl-L-homocysteine + H(+). Specifically methylates the N4 position of cytidine in position 1402 (C1402) of 16S rRNA. This is Ribosomal RNA small subunit methyltransferase H from Yersinia pseudotuberculosis serotype O:1b (strain IP 31758).